Here is a 472-residue protein sequence, read N- to C-terminus: Siroheme synthase 2 (472 aa).

A precorrin-2 dehydrogenase /sirohydrochlorin ferrochelatase region spans residues 1-204; sequence MDYFPIFCQL…EDQVQVEQHV (204 aa). Residues 22–23 and 43–44 contribute to the NAD(+) site; these read EV and CE. A Phosphoserine modification is found at Ser-128. A uroporphyrinogen-III C-methyltransferase region spans residues 216–472; sequence GEVVLVGAGP…GMKEQVERVG (257 aa). Pro-225 provides a ligand contact to S-adenosyl-L-methionine. The active-site Proton acceptor is Asp-248. Lys-270 (proton donor) is an active-site residue. S-adenosyl-L-methionine is bound by residues 301–303, Ile-306, 331–332, Met-382, and Gly-411; these read GGD and TA.

It in the N-terminal section; belongs to the precorrin-2 dehydrogenase / sirohydrochlorin ferrochelatase family. In the C-terminal section; belongs to the precorrin methyltransferase family.

It catalyses the reaction uroporphyrinogen III + 2 S-adenosyl-L-methionine = precorrin-2 + 2 S-adenosyl-L-homocysteine + H(+). The catalysed reaction is precorrin-2 + NAD(+) = sirohydrochlorin + NADH + 2 H(+). It carries out the reaction siroheme + 2 H(+) = sirohydrochlorin + Fe(2+). Its pathway is cofactor biosynthesis; adenosylcobalamin biosynthesis; precorrin-2 from uroporphyrinogen III: step 1/1. It participates in cofactor biosynthesis; adenosylcobalamin biosynthesis; sirohydrochlorin from precorrin-2: step 1/1. It functions in the pathway porphyrin-containing compound metabolism; siroheme biosynthesis; precorrin-2 from uroporphyrinogen III: step 1/1. The protein operates within porphyrin-containing compound metabolism; siroheme biosynthesis; siroheme from sirohydrochlorin: step 1/1. Its pathway is porphyrin-containing compound metabolism; siroheme biosynthesis; sirohydrochlorin from precorrin-2: step 1/1. Its function is as follows. Multifunctional enzyme that catalyzes the SAM-dependent methylations of uroporphyrinogen III at position C-2 and C-7 to form precorrin-2 via precorrin-1. Then it catalyzes the NAD-dependent ring dehydrogenation of precorrin-2 to yield sirohydrochlorin. Finally, it catalyzes the ferrochelation of sirohydrochlorin to yield siroheme. This chain is Siroheme synthase 2, found in Yersinia enterocolitica serotype O:8 / biotype 1B (strain NCTC 13174 / 8081).